The chain runs to 448 residues: Phosphoglucosamine mutase (448 aa).

Residue Ser102 is the Phosphoserine intermediate of the active site. Positions 102, 243, 245, and 247 each coordinate Mg(2+). Position 102 is a phosphoserine (Ser102).

Belongs to the phosphohexose mutase family. It depends on Mg(2+) as a cofactor. In terms of processing, activated by phosphorylation.

It catalyses the reaction alpha-D-glucosamine 1-phosphate = D-glucosamine 6-phosphate. In terms of biological role, catalyzes the conversion of glucosamine-6-phosphate to glucosamine-1-phosphate. In Parvibaculum lavamentivorans (strain DS-1 / DSM 13023 / NCIMB 13966), this protein is Phosphoglucosamine mutase.